We begin with the raw amino-acid sequence, 429 residues long: Enolase (429 aa).

A (2R)-2-phosphoglycerate-binding site is contributed by Gln163. Glu205 serves as the catalytic Proton donor. Residues Asp242, Glu287, and Asp314 each contribute to the Mg(2+) site. The (2R)-2-phosphoglycerate site is built by Lys339, Arg368, Ser369, and Lys390. Lys339 functions as the Proton acceptor in the catalytic mechanism.

This sequence belongs to the enolase family. It depends on Mg(2+) as a cofactor.

The protein resides in the cytoplasm. It localises to the secreted. It is found in the cell surface. The catalysed reaction is (2R)-2-phosphoglycerate = phosphoenolpyruvate + H2O. It functions in the pathway carbohydrate degradation; glycolysis; pyruvate from D-glyceraldehyde 3-phosphate: step 4/5. In terms of biological role, catalyzes the reversible conversion of 2-phosphoglycerate (2-PG) into phosphoenolpyruvate (PEP). It is essential for the degradation of carbohydrates via glycolysis. This chain is Enolase, found in Magnetococcus marinus (strain ATCC BAA-1437 / JCM 17883 / MC-1).